Consider the following 104-residue polypeptide: Disrupted in renal carcinoma protein 1 (104 aa).

The tract at residues 1-23 (MPEAHMQPAKLQTSLPTTDHGSK) is disordered. Positions 10–19 (KLQTSLPTTD) are enriched in polar residues.

As to expression, expressed at low steady-state level in adult placenta, testis, ovary, prostate, fetal kidney, spleen and skeletal muscle.

The chain is Disrupted in renal carcinoma protein 1 (DIRC1) from Homo sapiens (Human).